A 393-amino-acid polypeptide reads, in one-letter code: Protein TsgA homolog (393 aa).

The next 12 membrane-spanning stretches (helical) occupy residues 11-31, 51-71, 78-98, 101-121, 134-154, 162-182, 206-226, 245-265, 273-293, 297-317, 332-352, and 361-381; these read WISFLSYALTGALVIVTGMVM, FLNAGILISIFLNAWLMEIIP, FGFVLMVLAVAGLMLSHSLAL, AAMFVLGLVSGITMSIGTFLI, LLFTDSFFSMAGMIFPMVAAY, WYWVYACIGLVYVAIFILTFG, IGVLFLSIAALCYILGQLGFI, TLVSDFWMSYMFGMWAFSFIL, ILTVLAGLAAVLMYLFIKAQP, AWFILTLGFFSSAIYTSIITL, FVLTCGTIGTMLTFVVTGPIV, and LLTANGLYAVVFVMCFILGFV.

It belongs to the major facilitator superfamily. TsgA family.

The protein resides in the cell inner membrane. The chain is Protein TsgA homolog from Citrobacter koseri (strain ATCC BAA-895 / CDC 4225-83 / SGSC4696).